The sequence spans 258 residues: Acyl-[acyl-carrier-protein]--UDP-N-acetylglucosamine O-acyltransferase (258 aa).

It belongs to the transferase hexapeptide repeat family. LpxA subfamily. In terms of assembly, homotrimer.

It localises to the cytoplasm. The enzyme catalyses a (3R)-hydroxyacyl-[ACP] + UDP-N-acetyl-alpha-D-glucosamine = a UDP-3-O-[(3R)-3-hydroxyacyl]-N-acetyl-alpha-D-glucosamine + holo-[ACP]. It participates in glycolipid biosynthesis; lipid IV(A) biosynthesis; lipid IV(A) from (3R)-3-hydroxytetradecanoyl-[acyl-carrier-protein] and UDP-N-acetyl-alpha-D-glucosamine: step 1/6. Involved in the biosynthesis of lipid A, a phosphorylated glycolipid that anchors the lipopolysaccharide to the outer membrane of the cell. The chain is Acyl-[acyl-carrier-protein]--UDP-N-acetylglucosamine O-acyltransferase from Pseudomonas putida (strain GB-1).